A 636-amino-acid chain; its full sequence is tRNA 5-methylaminomethyl-2-thiouridine biosynthesis bifunctional protein MnmC (636 aa).

The tRNA (mnm(5)s(2)U34)-methyltransferase stretch occupies residues 1–202; that stretch reads MTVSKILKQV…ERAALRAQSH (202 aa). The tract at residues 227 to 636 is FAD-dependent cmnm(5)s(2)U34 oxidoreductase; that stretch reads IGGGVASACL…GKALEMSGKS (410 aa).

The protein in the N-terminal section; belongs to the methyltransferase superfamily. tRNA (mnm(5)s(2)U34)-methyltransferase family. It in the C-terminal section; belongs to the DAO family. The cofactor is FAD.

The protein localises to the cytoplasm. The catalysed reaction is 5-aminomethyl-2-thiouridine(34) in tRNA + S-adenosyl-L-methionine = 5-methylaminomethyl-2-thiouridine(34) in tRNA + S-adenosyl-L-homocysteine + H(+). Catalyzes the last two steps in the biosynthesis of 5-methylaminomethyl-2-thiouridine (mnm(5)s(2)U) at the wobble position (U34) in tRNA. Catalyzes the FAD-dependent demodification of cmnm(5)s(2)U34 to nm(5)s(2)U34, followed by the transfer of a methyl group from S-adenosyl-L-methionine to nm(5)s(2)U34, to form mnm(5)s(2)U34. The sequence is that of tRNA 5-methylaminomethyl-2-thiouridine biosynthesis bifunctional protein MnmC from Shewanella halifaxensis (strain HAW-EB4).